Reading from the N-terminus, the 397-residue chain is F-box protein At5g25290 (397 aa).

An F-box domain is found at 11-56 (VTLWSEIPMDILRSVFERLSFVDLHRAKIVCSHWYSCSKQSFLRKT).

The chain is F-box protein At5g25290 from Arabidopsis thaliana (Mouse-ear cress).